The chain runs to 44 residues: Protein non-structural 7b (44 aa).

Residues 9 to 29 (FYLCFLAFLLFLVLIMLIIFW) traverse the membrane as a helical segment.

It is found in the host membrane. In Homo sapiens (Human), this protein is Protein non-structural 7b.